We begin with the raw amino-acid sequence, 141 residues long: Acetyltransferase YPN_1354 (141 aa).

In terms of domain architecture, N-acetyltransferase spans 1–141 (MEIRIFQQDD…GKRLIVDQEY (141 aa)).

It belongs to the acetyltransferase family. YpeA subfamily.

This is Acetyltransferase YPN_1354 from Yersinia pestis bv. Antiqua (strain Nepal516).